The following is a 946-amino-acid chain: Nonribosomal peptide synthetase pngA (946 aa).

An adenylation (A) domain region spans residues 32 to 450 (AIASREPTRY…AGREKDSIIV (419 aa)). The 80-residue stretch at 580-659 (QPRSGLEQSL…TLSDALKQHA (80 aa)) folds into the Carrier domain. Ser618 is modified (O-(pantetheine 4'-phosphoryl)serine). A thioesterase (TE) domain region spans residues 681 to 933 (PIWLVHPVGG…ILDAENIFSF (253 aa)).

It belongs to the NRP synthetase family.

It carries out the reaction 2 3-phenylpyruvate + H(+) = phenguignardate + H2O. Functionally, nonribosomal peptide synthetase that mediates the biosynthesis of phenguignardic acid. PngA alone is sufficient for phenguignardic acid synthesis. PngA first activates phenylpyruvic acid (PPA) through its A domain to AMP-PPA. The PPA unit is then loaded to the T domain and eventually transferred to the TE domain. Another PPA unit is then loaded onto the T domain. The TE domain likely promotes the enolate formation on the attached unit, followed by a nucleophilic attack on the carbonyl to yield an ether linkage between the two units. Finally, the TE domain probably catalyzes a similar reaction to give the cyclized dioxolanone core and releases phenguignardic acid. The sequence is that of Nonribosomal peptide synthetase pngA from Aspergillus terreus (strain NIH 2624 / FGSC A1156).